We begin with the raw amino-acid sequence, 450 residues long: UDP-N-acetylmuramoylalanine--D-glutamate ligase (450 aa).

118-124 (GSNAKST) contacts ATP.

This sequence belongs to the MurCDEF family.

It is found in the cytoplasm. The enzyme catalyses UDP-N-acetyl-alpha-D-muramoyl-L-alanine + D-glutamate + ATP = UDP-N-acetyl-alpha-D-muramoyl-L-alanyl-D-glutamate + ADP + phosphate + H(+). The protein operates within cell wall biogenesis; peptidoglycan biosynthesis. In terms of biological role, cell wall formation. Catalyzes the addition of glutamate to the nucleotide precursor UDP-N-acetylmuramoyl-L-alanine (UMA). In Pseudomonas putida (strain ATCC 47054 / DSM 6125 / CFBP 8728 / NCIMB 11950 / KT2440), this protein is UDP-N-acetylmuramoylalanine--D-glutamate ligase.